The chain runs to 245 residues: tRNA (guanine-N(1)-)-methyltransferase (245 aa).

Residues Gly-113 and 133 to 138 (IGDYVL) each bind S-adenosyl-L-methionine.

It belongs to the RNA methyltransferase TrmD family. In terms of assembly, homodimer.

Its subcellular location is the cytoplasm. The catalysed reaction is guanosine(37) in tRNA + S-adenosyl-L-methionine = N(1)-methylguanosine(37) in tRNA + S-adenosyl-L-homocysteine + H(+). Functionally, specifically methylates guanosine-37 in various tRNAs. The polypeptide is tRNA (guanine-N(1)-)-methyltransferase (Oceanobacillus iheyensis (strain DSM 14371 / CIP 107618 / JCM 11309 / KCTC 3954 / HTE831)).